Here is a 188-residue protein sequence, read N- to C-terminus: dITP/XTP pyrophosphatase (188 aa).

Residue 10–15 (TSNPHK) participates in substrate binding. Residues E39 and D69 each contribute to the Mg(2+) site. The active-site Proton acceptor is the D69. Substrate is bound by residues S70, 145-148 (FGFD), K168, and 173-174 (HR).

It belongs to the HAM1 NTPase family. Homodimer. Requires Mg(2+) as cofactor.

It carries out the reaction XTP + H2O = XMP + diphosphate + H(+). It catalyses the reaction dITP + H2O = dIMP + diphosphate + H(+). The catalysed reaction is ITP + H2O = IMP + diphosphate + H(+). Pyrophosphatase that catalyzes the hydrolysis of nucleoside triphosphates to their monophosphate derivatives, with a high preference for the non-canonical purine nucleotides XTP (xanthosine triphosphate), dITP (deoxyinosine triphosphate) and ITP. Seems to function as a house-cleaning enzyme that removes non-canonical purine nucleotides from the nucleotide pool, thus preventing their incorporation into DNA/RNA and avoiding chromosomal lesions. This chain is dITP/XTP pyrophosphatase, found in Ignicoccus hospitalis (strain KIN4/I / DSM 18386 / JCM 14125).